The primary structure comprises 270 residues: Ribosomal RNA small subunit methyltransferase A (270 aa).

Asn-18, Leu-20, Gly-45, Glu-66, Asp-91, and Asn-112 together coordinate S-adenosyl-L-methionine.

It belongs to the class I-like SAM-binding methyltransferase superfamily. rRNA adenine N(6)-methyltransferase family. RsmA subfamily.

The protein resides in the cytoplasm. The enzyme catalyses adenosine(1518)/adenosine(1519) in 16S rRNA + 4 S-adenosyl-L-methionine = N(6)-dimethyladenosine(1518)/N(6)-dimethyladenosine(1519) in 16S rRNA + 4 S-adenosyl-L-homocysteine + 4 H(+). Specifically dimethylates two adjacent adenosines (A1518 and A1519) in the loop of a conserved hairpin near the 3'-end of 16S rRNA in the 30S particle. May play a critical role in biogenesis of 30S subunits. This Psychromonas ingrahamii (strain DSM 17664 / CCUG 51855 / 37) protein is Ribosomal RNA small subunit methyltransferase A.